The sequence spans 483 residues: Aspartyl/glutamyl-tRNA(Asn/Gln) amidotransferase subunit B (483 aa).

This sequence belongs to the GatB/GatE family. GatB subfamily. In terms of assembly, heterotrimer of A, B and C subunits.

The enzyme catalyses L-glutamyl-tRNA(Gln) + L-glutamine + ATP + H2O = L-glutaminyl-tRNA(Gln) + L-glutamate + ADP + phosphate + H(+). It carries out the reaction L-aspartyl-tRNA(Asn) + L-glutamine + ATP + H2O = L-asparaginyl-tRNA(Asn) + L-glutamate + ADP + phosphate + 2 H(+). Its function is as follows. Allows the formation of correctly charged Asn-tRNA(Asn) or Gln-tRNA(Gln) through the transamidation of misacylated Asp-tRNA(Asn) or Glu-tRNA(Gln) in organisms which lack either or both of asparaginyl-tRNA or glutaminyl-tRNA synthetases. The reaction takes place in the presence of glutamine and ATP through an activated phospho-Asp-tRNA(Asn) or phospho-Glu-tRNA(Gln). This is Aspartyl/glutamyl-tRNA(Asn/Gln) amidotransferase subunit B from Rickettsia canadensis (strain McKiel).